The following is a 39-amino-acid chain: Larval cuticle protein SC6 (39 aa).

Residues 15–39 enclose the Chitin-binding type R&amp;R domain; sequence VDQFKYGLELDNSIKADQEGHLEGD.

Functionally, component of the cuticle of the larva of flesh fly. The protein is Larval cuticle protein SC6 of Sarcophaga bullata (Grey flesh fly).